Consider the following 344-residue polypeptide: L-rhamnose-proton symporter (344 aa).

10 helical membrane-spanning segments follow: residues 4–24, 38–58, 68–88, 101–121, 137–157, 175–195, 214–234, 259–279, 290–310, and 323–343; these read AITMGIFWHLIGAASAACFYA, WSVGGIVSWIILPWAISALLL, FSLSTLLPVFLFGAMWGIGNI, MGIGIAIGITLIVGTLMTPII, TLLGVLVALIGVGIVTRAGQL, LVLAVMCGIFSAGMSFAMNAA, LPSYVVIMGGGAIINLGFCFI, VLLSALGGLMWYLQFFFYAWG, ISWMLHMSFYVLCGGIVGLVL, and VLSLGCVVIIVAANIVGIGMA.

Belongs to the L-rhamnose transporter (TC 2.A.7.6) family.

Its subcellular location is the cell inner membrane. It carries out the reaction L-rhamnopyranose(in) + H(+)(in) = L-rhamnopyranose(out) + H(+)(out). Uptake of L-rhamnose across the cytoplasmic membrane with the concomitant transport of protons into the cell (symport system). This Shigella dysenteriae serotype 1 (strain Sd197) protein is L-rhamnose-proton symporter.